The sequence spans 204 residues: 3-isopropylmalate dehydratase small subunit (204 aa).

Belongs to the LeuD family. LeuD type 1 subfamily. As to quaternary structure, heterodimer of LeuC and LeuD.

It carries out the reaction (2R,3S)-3-isopropylmalate = (2S)-2-isopropylmalate. It functions in the pathway amino-acid biosynthesis; L-leucine biosynthesis; L-leucine from 3-methyl-2-oxobutanoate: step 2/4. Catalyzes the isomerization between 2-isopropylmalate and 3-isopropylmalate, via the formation of 2-isopropylmaleate. The chain is 3-isopropylmalate dehydratase small subunit from Roseiflexus sp. (strain RS-1).